A 202-amino-acid chain; its full sequence is N-(5'-phosphoribosyl)anthranilate isomerase (202 aa).

The protein belongs to the TrpF family.

The catalysed reaction is N-(5-phospho-beta-D-ribosyl)anthranilate = 1-(2-carboxyphenylamino)-1-deoxy-D-ribulose 5-phosphate. Its pathway is amino-acid biosynthesis; L-tryptophan biosynthesis; L-tryptophan from chorismate: step 3/5. The protein is N-(5'-phosphoribosyl)anthranilate isomerase of Listeria monocytogenes serotype 4b (strain F2365).